The primary structure comprises 206 residues: Protease (206 aa).

Residues histidine 55, aspartate 72, and cysteine 122 contribute to the active site.

This sequence belongs to the peptidase C5 family. Interacts with protease cofactor pVI-C; this interaction is necessary for protease activation.

The protein resides in the virion. It is found in the host nucleus. The catalysed reaction is Cleaves proteins of the adenovirus and its host cell at two consensus sites: -Yaa-Xaa-Gly-Gly-|-Xaa- and -Yaa-Xaa-Gly-Xaa-|-Gly- (in which Yaa is Met, Ile or Leu, and Xaa is any amino acid).. Its activity is regulated as follows. Requires DNA and protease cofactor for maximal activation. Inside nascent virions, becomes partially activated by binding to the viral DNA, allowing it to cleave the cofactor that binds to the protease and fully activates it. Actin, like the viral protease cofactor, seems to act as a cofactor in the cleavage of cytokeratin 18 and of actin itself. Functionally, cleaves viral precursor proteins (pTP, pIIIa, pVI, pVII, pVIII, and pX) inside newly assembled particles giving rise to mature virions. Protease complexed to its cofactor slides along the viral DNA to specifically locate and cleave the viral precursors. Mature virions have a weakened organization compared to the unmature virions, thereby facilitating subsequent uncoating. Without maturation, the particle lacks infectivity and is unable to uncoat. Late in adenovirus infection, in the cytoplasm, may participate in the cytoskeleton destruction. Cleaves host cell cytoskeletal keratins K7 and K18. This chain is Protease, found in Fowl adenovirus A serotype 1 (strain CELO / Phelps) (FAdV-1).